The primary structure comprises 273 residues: Bis(5'-nucleosyl)-tetraphosphatase, symmetrical (273 aa).

This sequence belongs to the Ap4A hydrolase family.

It carries out the reaction P(1),P(4)-bis(5'-adenosyl) tetraphosphate + H2O = 2 ADP + 2 H(+). Hydrolyzes diadenosine 5',5'''-P1,P4-tetraphosphate to yield ADP. This is Bis(5'-nucleosyl)-tetraphosphatase, symmetrical from Histophilus somni (strain 129Pt) (Haemophilus somnus).